The chain runs to 383 residues: Aliphatic nitrilase (383 aa).

The CN hydrolase domain occupies 13 to 288 (VKVATVQAEP…EGLLYAELDL (276 aa)). The active-site Proton acceptor is the Glu53. The active-site Proton donor is the Lys136. Cys170 acts as the Nucleophile in catalysis. Positions 359–383 (ATLPLDAPAPAPAPEQKSGRAKAEA) are disordered.

It belongs to the carbon-nitrogen hydrolase superfamily. Nitrilase family.

It carries out the reaction an aliphatic nitrile + 2 H2O = a carboxylate + NH4(+). In terms of biological role, acts on aliphatic nitriles such as acrylonitrile, crotononitrile and glutaronitrile. In Rhodococcus rhodochrous, this protein is Aliphatic nitrilase.